The sequence spans 346 residues: Probable dual-specificity RNA methyltransferase RlmN (346 aa).

E91 acts as the Proton acceptor in catalysis. The region spanning T97–E325 is the Radical SAM core domain. C104 and C330 are oxidised to a cystine. Residues C111, C115, and C118 each coordinate [4Fe-4S] cluster. S-adenosyl-L-methionine-binding positions include G158 to E159, S188, S211 to H213, and N287. C330 acts as the S-methylcysteine intermediate in catalysis.

Belongs to the radical SAM superfamily. RlmN family. The cofactor is [4Fe-4S] cluster.

The protein resides in the cytoplasm. It carries out the reaction adenosine(2503) in 23S rRNA + 2 reduced [2Fe-2S]-[ferredoxin] + 2 S-adenosyl-L-methionine = 2-methyladenosine(2503) in 23S rRNA + 5'-deoxyadenosine + L-methionine + 2 oxidized [2Fe-2S]-[ferredoxin] + S-adenosyl-L-homocysteine. The enzyme catalyses adenosine(37) in tRNA + 2 reduced [2Fe-2S]-[ferredoxin] + 2 S-adenosyl-L-methionine = 2-methyladenosine(37) in tRNA + 5'-deoxyadenosine + L-methionine + 2 oxidized [2Fe-2S]-[ferredoxin] + S-adenosyl-L-homocysteine. Specifically methylates position 2 of adenine 2503 in 23S rRNA and position 2 of adenine 37 in tRNAs. The chain is Probable dual-specificity RNA methyltransferase RlmN from Picosynechococcus sp. (strain ATCC 27264 / PCC 7002 / PR-6) (Agmenellum quadruplicatum).